The following is a 277-amino-acid chain: 2-dehydro-3-deoxyphosphooctonate aldolase (277 aa).

Belongs to the KdsA family.

Its subcellular location is the cytoplasm. It catalyses the reaction D-arabinose 5-phosphate + phosphoenolpyruvate + H2O = 3-deoxy-alpha-D-manno-2-octulosonate-8-phosphate + phosphate. It participates in carbohydrate biosynthesis; 3-deoxy-D-manno-octulosonate biosynthesis; 3-deoxy-D-manno-octulosonate from D-ribulose 5-phosphate: step 2/3. It functions in the pathway bacterial outer membrane biogenesis; lipopolysaccharide biosynthesis. The chain is 2-dehydro-3-deoxyphosphooctonate aldolase from Syntrophotalea carbinolica (strain DSM 2380 / NBRC 103641 / GraBd1) (Pelobacter carbinolicus).